A 670-amino-acid chain; its full sequence is Neutral ceramidase (670 aa).

Positions 1-24 (MSRSAFTALLLSCVLLALSMPARA) are cleaved as a signal peptide. Mg(2+) is bound at residue histidine 61. The substrate site is built by asparagine 84, glutamine 92, and aspartate 111. Histidine 121 serves as a coordination point for Zn(2+). Serine 130 serves as a coordination point for substrate. Histidine 228 is a binding site for Zn(2+). Serine 274 acts as the Nucleophile in catalysis. Cysteine 346 and cysteine 394 are disulfide-bonded. Glutamate 435 provides a ligand contact to Zn(2+). Tyrosine 469 provides a ligand contact to substrate. Tyrosine 472 contacts Zn(2+). 3 residues coordinate Mg(2+): aspartate 603, aspartate 605, and threonine 608. Positions 644-670 (NAKNFWTQKISEIGGSTRSFEVLGTTP) are required for correct folding and localization.

The protein belongs to the neutral ceramidase family. As to quaternary structure, homodimer. Zn(2+) is required as a cofactor. It depends on Mg(2+) as a cofactor.

The protein localises to the secreted. The enzyme catalyses an N-acylsphing-4-enine + H2O = sphing-4-enine + a fatty acid. Its activity is regulated as follows. Inhibited by EDTA, EGTA and D/L-sphinganine D-erythro-sphingosine. L-erythro-sphingosine is a less powerful inhibitor. Stimulated by glycerophospholipids: cardiolipin is the most effective, followed by phosphatidic acid, phosphatidylethanolamine and phosphatidylglycerol, whereas phosphatidylcholine, lysophosphatidic acid and diacylglycerol are less effective. Its function is as follows. Catalyzes the cleavage of the N-acyl linkage of the ceramides (Cers) to yield sphingosine (Sph) and free fatty acid at an optimal pH of 8-9. Also catalyzes the synthesis of Cers from Sph and fatty acid. This Pseudomonas aeruginosa (strain ATCC 15692 / DSM 22644 / CIP 104116 / JCM 14847 / LMG 12228 / 1C / PRS 101 / PAO1) protein is Neutral ceramidase.